A 201-amino-acid polypeptide reads, in one-letter code: MELVITGSNNKVSVSDAVFGREFSEDLVHQVVVAYRNAGRAGTKAQKTRSEVAGTTKKSKKQKGGGARHGALTAPIFVGGGVTFAAKPRSFEQKVNRKMYRAAICAIFSELNRQGRLMIVDAFDLEATKTKGLIEKLKGLEVGKRPLIVTEEASEHLYLSARNLPYVQVRDVQGLDPVALVGADTVVITADAVKKVEEWLA.

The disordered stretch occupies residues 44–68 (KAQKTRSEVAGTTKKSKKQKGGGAR).

It belongs to the universal ribosomal protein uL4 family. Part of the 50S ribosomal subunit.

One of the primary rRNA binding proteins, this protein initially binds near the 5'-end of the 23S rRNA. It is important during the early stages of 50S assembly. It makes multiple contacts with different domains of the 23S rRNA in the assembled 50S subunit and ribosome. In terms of biological role, forms part of the polypeptide exit tunnel. The sequence is that of Large ribosomal subunit protein uL4 from Xanthomonas axonopodis pv. citri (strain 306).